Reading from the N-terminus, the 181-residue chain is Histone deacetylase complex subunit SAP30L-B (181 aa).

2 disulfides stabilise this stretch: cysteine 26/cysteine 27 and cysteine 35/cysteine 71. Residues 26–74 (CCLIDGGERCPRPAGNASFSKRVQKSISQKKLKLDIDKSVRHLYICDFH) form an Atypical zinc finger. The disordered stretch occupies residues 82–103 (RNKRKRKTSDDGGDSPEHETDV). A Nuclear localization signal (NLS) motif is present at residues 83 to 88 (NKRKRK). An important for DNA and phosphoinositide binding region spans residues 85–87 (RKR).

Belongs to the SAP30 family. In terms of assembly, interacts with components of the histone deacetylase complex sin3a, hdac1 and hdac2. Binds histones and nucleosomes.

The protein localises to the nucleus. The protein resides in the nucleolus. Functions as a transcription repressor, probably via its interaction with histone deacetylase complexes. Involved in the functional recruitment of the class 1 Sin3-histone deacetylase complex (HDAC) to the nucleolus. Binds DNA, apparently without sequence-specificity, and bends bound double-stranded DNA. Binds phosphoinositol phosphates (phosphoinositol 3-phosphate, phosphoinositol 4-phosphate and phosphoinositol 5-phosphate) via the same basic sequence motif that mediates DNA binding and nuclear import. The protein is Histone deacetylase complex subunit SAP30L-B (sap30l-b) of Xenopus laevis (African clawed frog).